The primary structure comprises 271 residues: Shikimate dehydrogenase-like protein HI_0607 (271 aa).

Lys-67 functions as the Proton donor/acceptor in the catalytic mechanism. Asp-103 is a substrate binding site. NADP(+) is bound by residues 126–130 (GSGGM), Lys-154, and Ser-184.

The protein belongs to the shikimate dehydrogenase-like family. In terms of assembly, homodimer.

The catalysed reaction is shikimate + NADP(+) = 3-dehydroshikimate + NADPH + H(+). In vitro, is able to catalyze the NADP(+)-dependent oxidation of shikimate to 3-dehydroshikimate. However, has much lower activity than classical shikimate dehydrogenases AroE, indicating that shikimate may not be the biological substrate. Cannot utilize NAD(+) instead of NADP(+). Is not able to catalyze the oxidation of quinate. The chain is Shikimate dehydrogenase-like protein HI_0607 from Haemophilus influenzae (strain ATCC 51907 / DSM 11121 / KW20 / Rd).